Reading from the N-terminus, the 427-residue chain is Zinc finger protein 134 (427 aa).

A Glycyl lysine isopeptide (Lys-Gly) (interchain with G-Cter in SUMO2) cross-link involves residue Lys-20. A C2H2-type 1 zinc finger spans residues 50-72 (LPCDICGPILKDILHLDEHQGTH). A C2H2-type 2; degenerate zinc finger spans residues 78 to 100 (HTCGACGRQFWFSANLHQYQKCY). Glycyl lysine isopeptide (Lys-Gly) (interchain with G-Cter in SUMO2) cross-links involve residues Lys-135 and Lys-139. 9 C2H2-type zinc fingers span residues 176 to 198 (YKCS…QRIH), 204 to 226 (YECS…QRIH), 232 to 254 (YECS…KRIH), 260 to 282 (YKCN…QRVH), 288 to 310 (YKCS…ESIH), 316 to 338 (YDCS…QRIH), 344 to 366 (FECI…QRVH), 372 to 394 (FVCS…QRVH), and 400 to 422 (YECS…QKVH).

It belongs to the krueppel C2H2-type zinc-finger protein family.

The protein localises to the nucleus. May be involved in transcriptional regulation. This chain is Zinc finger protein 134 (ZNF134), found in Homo sapiens (Human).